The chain runs to 311 residues: Olfactory receptor 5M8 (311 aa).

The Extracellular segment spans residues 1–24 (MRRNCTLVTEFILLGLTSRRELQI). An N-linked (GlcNAc...) asparagine glycan is attached at N4. A helical transmembrane segment spans residues 25-45 (LLFTLFLAIYMVTVAGNLGMI). Over 46–53 (VLIQANAW) the chain is Cytoplasmic. The chain crosses the membrane as a helical span at residues 54–74 (LHMPMYFFLSHLSFVDLCFSS). Over 75–98 (NVTPKMLEIFLSEKKSISYPACLV) the chain is Extracellular. C96 and C188 are oxidised to a cystine. Residues 99 to 119 (QCYLFIALVHVEIYILAVMAF) traverse the membrane as a helical segment. The Cytoplasmic segment spans residues 120–138 (DRYMAICNPLLYGSRMSKS). The helical transmembrane segment at 139 to 159 (VCSFLITVPYVYGALTGLMET) threads the bilayer. Residues 160 to 195 (MWTYNLAFCGPNEINHFYCADPPLIKLACSDTYNKE) are Extracellular-facing. A helical membrane pass occupies residues 196–216 (LSMFIVAGWNLSFSLFIICIS). At 217–236 (YLYIFPAILKIRSTEGRQKA) the chain is on the cytoplasmic side. Residues 237-257 (FSTCGSHLTAVTIFYATLFFM) form a helical membrane-spanning segment. The Extracellular segment spans residues 258 to 270 (YLRPPSKESVEQG). The chain crosses the membrane as a helical span at residues 271–291 (KMVAVFYTTVIPMLNLIIYSL). Topologically, residues 292-311 (RNKNVKEALIKELSMKIYFS) are cytoplasmic.

This sequence belongs to the G-protein coupled receptor 1 family.

It is found in the cell membrane. Its function is as follows. Odorant receptor. This Homo sapiens (Human) protein is Olfactory receptor 5M8 (OR5M8).